A 429-amino-acid polypeptide reads, in one-letter code: MEWEEIYKEKLVTAEKAVSKIENHSRVVFAHAVGEPVDLVNALVKNKDNYIGLEIVHMVAMGKGEYTKEGMQRHFRHNALFVGGCTRDAVNSGRADYTPCFFYEVPSLFKEKRLPVDVALIQVSEPDKYGYCSFGVSNDYTKPAAESAKLVIAEVNKNMPRTLGDSFIHVSDIDYIVEASHPLLELQPPKLGDVEKAIGENCASLIEDGATLQLGIGAIPDAVLLFLKNKKNLGIHSEMISDGVMELVKAGVINNKKKTLHPGKIVVTFLMGTKKLYDFVNNNPMVETYSVDYVNNPLVIMKNDNMVSINSCVQVDLMGQVCSESIGLKQISGVGGQVDFIRGANLSKGGKAIIAIPSTAGKGKVSRITPLLDTGAAVTTSRNEVDYVVTEYGVAHLKGKTLRNRARALINIAHPKFRESLMNEFKKRF.

215 to 219 lines the CoA pocket; sequence GIGAI. Residue Glu238 is the 5-glutamyl coenzyme A thioester intermediate of the active site. Position 336 (Gly336) interacts with CoA.

This sequence belongs to the acetyl-CoA hydrolase/transferase family.

This is 4-hydroxybutyrate coenzyme A transferase (cat2) from Clostridium kluyveri (strain ATCC 8527 / DSM 555 / NBRC 12016 / NCIMB 10680 / K1).